The primary structure comprises 91 residues: Small ribosomal subunit protein bS16 (91 aa).

This sequence belongs to the bacterial ribosomal protein bS16 family.

This Ruthia magnifica subsp. Calyptogena magnifica protein is Small ribosomal subunit protein bS16.